A 220-amino-acid polypeptide reads, in one-letter code: Glutathione S-transferase U26 (220 aa).

One can recognise a GST N-terminal domain in the interval 4–83; it reads DQVILLDYWP…YIDEVWSDAS (80 aa). Glutathione contacts are provided by residues 14 to 15, 40 to 41, 54 to 55, and 67 to 68; these read SM, VK, KI, and ES. Residues 89 to 210 enclose the GST C-terminal domain; the sequence is DPYQKSRARF…ADSDRIIEYV (122 aa).

The protein belongs to the GST superfamily. Tau family.

It localises to the cytoplasm. It is found in the cytosol. It carries out the reaction RX + glutathione = an S-substituted glutathione + a halide anion + H(+). Functionally, in vitro, possesses glutathione S-transferase activity toward 1-chloro-2,4-dinitrobenzene (CDNB). May be involved in the conjugation of reduced glutathione to a wide number of exogenous and endogenous hydrophobic electrophiles and have a detoxification role against certain herbicides. In Arabidopsis thaliana (Mouse-ear cress), this protein is Glutathione S-transferase U26 (GSTU26).